The chain runs to 399 residues: MSKLILAINAGSSSLKFQLIEMPEEKIVTKGLIERIGLKDSVFTIEVNGDKIKETNDIADHEEAVNIMLDSFKKHGVIDSIYDINGTGHRVVHGGELFPESVYITDEVEKQIESLSELAPLHNPANLMGIRAFRKLLPEIPHVAVFDTSFHQTMPEKSFLYSLPYQYYKDYGIRKYGFHGTSHKYVSQRAADILGKPIEELRLISCHIGNGASIAAIDGGESVDTSMGFTPLAGVTMGTRSGNIDPALIPFIMEKTGKNAEEVLNTLNKESGLLGISGTSSDLRDIQGEAEEGKDRAQLALDVFASRIHKYIGSYATRMHGVDVIVFTAGVGENSDVVRAKVLEGLEFMGVYWDAKKNESIHGEEAFINYPHSPVKVIVIPTNEEVMIARDVINFGDLK.

N9 provides a ligand contact to Mg(2+). K16 lines the ATP pocket. R90 is a binding site for substrate. D147 functions as the Proton donor/acceptor in the catalytic mechanism. ATP-binding positions include 207–211 (HIGNG), 282–284 (DLR), and 330–334 (GVGEN). Residue E384 participates in Mg(2+) binding.

The protein belongs to the acetokinase family. Homodimer. The cofactor is Mg(2+). It depends on Mn(2+) as a cofactor.

It localises to the cytoplasm. The catalysed reaction is acetate + ATP = acetyl phosphate + ADP. It participates in metabolic intermediate biosynthesis; acetyl-CoA biosynthesis; acetyl-CoA from acetate: step 1/2. Functionally, catalyzes the formation of acetyl phosphate from acetate and ATP. Can also catalyze the reverse reaction. In Staphylococcus saprophyticus subsp. saprophyticus (strain ATCC 15305 / DSM 20229 / NCIMB 8711 / NCTC 7292 / S-41), this protein is Acetate kinase.